The chain runs to 370 residues: Phospho-N-acetylmuramoyl-pentapeptide-transferase (370 aa).

10 helical membrane-spanning segments follow: residues 24-44, 78-98, 103-123, 138-158, 177-197, 209-229, 245-265, 273-293, 298-318, and 347-367; these read YLTF…VAMG, TMGG…WADL, VWVV…DDYA, KLVA…LFAP, ALVI…IAGF, GLAI…AYLV, GVGE…GFLW, IFMG…IAVC, LVLG…MIQV, and TVVI…LATL.

Belongs to the glycosyltransferase 4 family. MraY subfamily. It depends on Mg(2+) as a cofactor.

Its subcellular location is the cell inner membrane. It carries out the reaction UDP-N-acetyl-alpha-D-muramoyl-L-alanyl-gamma-D-glutamyl-meso-2,6-diaminopimeloyl-D-alanyl-D-alanine + di-trans,octa-cis-undecaprenyl phosphate = di-trans,octa-cis-undecaprenyl diphospho-N-acetyl-alpha-D-muramoyl-L-alanyl-D-glutamyl-meso-2,6-diaminopimeloyl-D-alanyl-D-alanine + UMP. It participates in cell wall biogenesis; peptidoglycan biosynthesis. Catalyzes the initial step of the lipid cycle reactions in the biosynthesis of the cell wall peptidoglycan: transfers peptidoglycan precursor phospho-MurNAc-pentapeptide from UDP-MurNAc-pentapeptide onto the lipid carrier undecaprenyl phosphate, yielding undecaprenyl-pyrophosphoryl-MurNAc-pentapeptide, known as lipid I. The polypeptide is Phospho-N-acetylmuramoyl-pentapeptide-transferase (Caulobacter vibrioides (strain NA1000 / CB15N) (Caulobacter crescentus)).